A 3131-amino-acid chain; its full sequence is MLEGLLANFLNRLLGEYIENFDATQLKVAVWNGDVTLRNLQLKRSAFRKLELPISVQYGLVEELTLKIPWSSLKNKPVEIYIVGIRALASMEENVKSQSEVDPHQVLESKRRQMQLWEASQIGKAETAYDPKTQTFTESLITRMIDNIQINIRDIHIRFEHLPVSNVVPGGYSFGLLLSEFSIESCNEEWTSTFVETESQTIYKLCSLRGFGIYSDETAECIDKTDINELMNTFQALITDFQSREKDYIIAPVTGMAKVTINKLPTPEIPRFLSQISFRGFDVSLNDSQISCGMSLAHELQDVMSKLAFRKRIVGNVSLDTPLDYLRFIFQKTLHDIQQKHYARSWPAIKAFCEKRRNYIKLYKKKFLAVQLSADESKELDVLELNLDISQLKLFRSLAYQEIKNEGFEPQPPKQQGWGSWMWNSFRGASDENGEVTDDQRKTVIDAIGLNDSIIESAHVGDLQSNTSLFDVRLEVPSGKFSLLKYPKKENVISLELLNFFSQFKCNKKDYSFVANLGSLKMYNDDRNFLYPRETSNKEIETTSPSIFTLSFERSSSDDNDTDTLGINLRALEFFYDPNLLLRVKGFQSSLFANDNGRKLVRLANDAVTDFTSQTVQNLQEYLNEKRKLNVNFQFQTPLLIFPEDCNNPESFSLFVDAGFISITSQNVETNDKESNSESETLYHLIYDRYRVSLESARLLLGPLNELKNESNKINEEYYLMNELNTEIFIQAQRVPTPQYPRIKVEGNMPCLSFILSDAQFRILNNLASTMLKDGKASDDDDNGDWRPESSESLDSHESEYKLNNTPSEQSVKVSHFFEFNMKLGEVTLILCREDSQTKRNSMVSVNFAKLLLSFNQFEDNSHLRMSINSFHINDMLSKSSRDNNRQLMRCYAPDSVDAENTPVIVEIKSVKAGENQSETNTTVDFLCANGDFYLAKFSILTLIEFLPSFAPPPSNDKQSTPQVSNSAAGKMELNFKIHKIGLRLLENYESKPICIDLLALDLSVNSTKGISEVESRVDKIQVMAWDHEKDEIVTLIDSKQDSLFDLKCKMQEGWFIHSPNPSTDVNIKMGSFTMLCHKQPIEEILNYASNFGHYKAIVQSVKYLAETGTHQVQQGTNVNINLYISNPIFQIPLTLENGSSAMVEILPGSFSLKTPSWLPNLTLNLESKSTTLRTIYYSKDFDEKGNQITVLDDLNISLDGSIVQAVDSAITNYAIDLHCGISELLIHLSQAQYLILLKLASNLPEMLSIANAFSANVDAPSVMTLLSEELYSIDTVNDAISNLSQNSSFDMKFGLHFPKISLNLYDGTFITPENSLSPLSNFTLNEIRAEGSYDLKTGASALIKMASLAIEDVRSEKSRYFSNVIIPSTDTESQLQVSFQYKPDTSSILLEGDIFKSMYVLSLDHLLSIYYWFGQPLMEKKLESPDDVQSLQAESSVSTPAVTAASEKSISLSVRFDIRNTSLVFVADASKSTSQAIVLRTDQISLVKQLSYSLTVQKMGMFVTRMDKLDDGIQILDDFDIGFGLVQDCSENKSFSATLDLDRLLFRISVYDLLLLQSIAQASVSVISSYKDKSSSISENMNSGDYGQQILNASNIAAVQQKAEQTATTLLTVLGHDSLISEEFTINSAGIQLILISDAHCLPVFDFTIENFNVLVKDWSTNLSATTSLTLHCNAFNFAKSHWEPVIEPWTFSTTAIMKDGMHEVNINSDDIAQISLTPMMVTDVHRLIKFYLTNQENNIEKRPEGYPYVILNQTGYNLSIQYGNLNSSEMQSLSLPSGKCVPCRFESKEVLTSRMSSKVQDVATKVRVSFDSTWYPVDEVSVHQEGSFLYELKPRIDQRTFLLVTVVLLESNIKQIILSSPYSIVNRTKEVIEVVCNDRSGHRQSSVIKIDPNETGYVPLDLACLYPLRIRPVSKLGFLWSNQIVDWHSLNKSPLQYLTCESTSTSWKHNLLVFARNLMDGSLQNDYPFLQLNILPTLQIENLLPYEINLRIIERSSGNDWRSSLSPGDSLPILHTDSKSFLLMGINVPDLDLQPVDLPIIYTPISSGQDVQTSALLTASDKQDVVKLILKYEKLPGTNYVSKVMIYPPYVIFNHTDLSIQVTSSSPNSIRYTIPSGSYSNDIKPYFYSFDESGRKNRAMISIDNGTSWSADIGFDTLGSSSQVEVRKTNESDVCLLGMSISESSGKFCLTKSVTFTPRFVFKNHLDCTVSLREFGSSKVLHLPSNELIPMMYFSNPQEIALLLSLPSSNNHWTSPFLAQNVGIVHLKAFEFDDDDNNMSTTLLRLCVTLEDATFFVTITKEDKAWPFRLKNCTSREICYEQKRPDPESVDSRFLQGSRSMKYALNPGEEANYSWDFPILKSKLLQVEVGKAIHDLDISSVGQLEPWHPTELDQKIRIHPEVKVDSLTSLVTFNEIDLSKPKLPSRTNSNVKGSIVEQKFKLVLQLKGFGISLIDKKYEEFAYATLKNFTFRFDDSKDLNTFGMSLGWLQIDNQMLDSVYPIALFPTMITQEVKQDDPQLLQLRFSVLKDSSFNILYIKYASLLLQELSLEVEDRLVLTLLQLLYPSSDVSKDSASLSKNAFADKFEIPDLDADVYRSNVFFETLHLQPTRLNISFETSYESDQPAVKSSNPTLDFMTGILISTLGNIHDAPVQLNSILLENARGTLSEMANRVASHYKQQVGYQIYKIAGRADFLGNPVGLFNNVASGVFDMFYEPYQGFLLQDSQSFGDSFARGTSSFMRKTIYGVSDSVSKITGTISKGLSTMTMDPKYQNSRRRFRSRNRPKEAVYGVTAGANSFYDSMSSGFKGLKKPFTDPKNNSAGKFLKGFGKGMLGLATKPAIGLLDMTSNVSEGIRNSTDVRTNPEIDKVRVPRYVEFGGLIVPFKPYESLGKYMLSCLDDGKYAFDEYLYHAEIQNVDILYISTKHFIITGSNYIVKIAVPVKQISGLRVSEHDLNSSCLFTFAVFWQRCESLFDCEYLSTPNLELFVKEKKKPIMSITMSDSSAYGEELMRERFEHLLKAYEKMALMVAEQEEFNAKIEDMALKLLSEKYDNEAYQAELFYRLSNCVEKVLHNKISITDLKTEYEEILEQTLKKECKAYERSCIENVKLKKRTEQATAYYASSSSEP.

Residues 2–115 (LEGLLANFLN…VLESKRRQMQ (114 aa)) form the Chorein N-terminal domain. The span at 774–801 (DGKASDDDDNGDWRPESSESLDSHESEY) shows a compositional bias: basic and acidic residues. Positions 774–807 (DGKASDDDDNGDWRPESSESLDSHESEYKLNNTP) are disordered. The SHR-BD domain occupies 2085–2363 (KVMIYPPYVI…NYSWDFPILK (279 aa)).

This sequence belongs to the VPS13 family.

The protein localises to the golgi apparatus. Its subcellular location is the trans-Golgi network. Its function is as follows. Mediates the transfer of lipids between membranes at organelle contact sites. May play a role in mitochondrial lipid homeostasis, Golgi vesicle transport, reticulophagy, actin cytoskeleton organization and formation of the forespore membrane. The polypeptide is Intermembrane lipid transfer protein vps1302 (Schizosaccharomyces pombe (strain 972 / ATCC 24843) (Fission yeast)).